A 380-amino-acid chain; its full sequence is Alkaline protease (380 aa).

Positions methionine 1–alanine 27 are cleaved as a signal peptide. A propeptide spanning residues alanine 28–alanine 112 is cleaved from the precursor. Positions lysine 34–methionine 111 constitute an Inhibitor I9 domain. Glutamine 113 serves as a coordination point for Ca(2+). Positions proline 116–threonine 379 constitute a Peptidase S8 domain. Aspartate 143 serves as the catalytic Charge relay system. Ca(2+) is bound at residue aspartate 151. Histidine 173 serves as the catalytic Charge relay system. Ca(2+)-binding residues include leucine 184, asparagine 186, isoleucine 188, valine 190, alanine 274, tyrosine 276, and alanine 279. Serine 326 serves as the catalytic Charge relay system.

Belongs to the peptidase S8 family. Requires Ca(2+) as cofactor.

It localises to the secreted. In Alkalihalobacillus alcalophilus (Bacillus alcalophilus), this protein is Alkaline protease.